The following is a 482-amino-acid chain: Matrix metalloproteinase-20 (482 aa).

Residues 1-21 (MKVLPASGLAVLVTALKFATA) form the signal peptide. Residues 22–106 (DPNLLAATPR…PRCGVPDVAN (85 aa)) constitute a propeptide that is removed on maturation. The Cysteine switch signature appears at 97 to 104 (PRCGVPDV). Position 99 (C99) interacts with Zn(2+). 3 residues coordinate Ca(2+): E163, A164, and D165. Residues H175 and D177 each contribute to the Zn(2+) site. The Ca(2+) site is built by D182, G183, R185, and T187. Residue H190 coordinates Zn(2+). Ca(2+)-binding residues include E196, G197, G199, and D201. Residue H203 participates in Zn(2+) binding. Positions 205 and 208 each coordinate Ca(2+). H225 lines the Zn(2+) pocket. Residue E226 is part of the active site. 2 residues coordinate Zn(2+): H229 and H235. Hemopexin repeat units follow at residues 292–342 (PDLC…FPQL), 343–388 (MSNV…GFPR), 390–438 (VQRI…FSGV), and 439–482 (SGHI…WIGC). A disulfide bridge links C295 with C482.

The protein belongs to the peptidase M10A family. Requires Zn(2+) as cofactor. Ca(2+) is required as a cofactor. Post-translationally, autoactivates at least at the 106-Asn-|-Tyr-107 site. As to expression, expressed in the enamel organ.

The protein localises to the secreted. It localises to the extracellular space. Its subcellular location is the extracellular matrix. In terms of biological role, degrades amelogenin, the major protein component of the enamel matrix and two of the macromolecules characterizing the cartilage extracellular matrix: aggrecan and the cartilage oligomeric matrix protein (COMP). May play a central role in tooth enamel formation. Cleaves aggrecan at the '360-Asn-|-Phe-361' site. The protein is Matrix metalloproteinase-20 (Mmp20) of Mus musculus (Mouse).